We begin with the raw amino-acid sequence, 273 residues long: Shikimate dehydrogenase (NADP(+)) (273 aa).

Shikimate-binding positions include 19–21 (SQS) and T66. Residue K70 is the Proton acceptor of the active site. Residue E82 participates in NADP(+) binding. Shikimate-binding residues include N91 and D107. Residues 131–135 (GAGGA) and M217 contribute to the NADP(+) site. Y219 contributes to the shikimate binding site. G241 lines the NADP(+) pocket.

It belongs to the shikimate dehydrogenase family. Homodimer.

It carries out the reaction shikimate + NADP(+) = 3-dehydroshikimate + NADPH + H(+). Its pathway is metabolic intermediate biosynthesis; chorismate biosynthesis; chorismate from D-erythrose 4-phosphate and phosphoenolpyruvate: step 4/7. In terms of biological role, involved in the biosynthesis of the chorismate, which leads to the biosynthesis of aromatic amino acids. Catalyzes the reversible NADPH linked reduction of 3-dehydroshikimate (DHSA) to yield shikimate (SA). This Buchnera aphidicola subsp. Schizaphis graminum (strain Sg) protein is Shikimate dehydrogenase (NADP(+)).